A 264-amino-acid polypeptide reads, in one-letter code: uncharacterized protein (264 aa).

8–15 lines the ATP pocket; sequence IQGGTGKT.

This is an uncharacterized protein from Methanocaldococcus jannaschii (strain ATCC 43067 / DSM 2661 / JAL-1 / JCM 10045 / NBRC 100440) (Methanococcus jannaschii).